We begin with the raw amino-acid sequence, 247 residues long: tRNA pseudouridine synthase A (247 aa).

Catalysis depends on Asp58, which acts as the Nucleophile. Residue Tyr116 participates in substrate binding.

The protein belongs to the tRNA pseudouridine synthase TruA family. In terms of assembly, homodimer.

It catalyses the reaction uridine(38/39/40) in tRNA = pseudouridine(38/39/40) in tRNA. Its function is as follows. Formation of pseudouridine at positions 38, 39 and 40 in the anticodon stem and loop of transfer RNAs. The protein is tRNA pseudouridine synthase A of Hydrogenobaculum sp. (strain Y04AAS1).